The sequence spans 929 residues: Isoleucine--tRNA ligase (929 aa).

The short motif at 58-68 is the 'HIGH' region element; sequence PYANGDIHIGH. Residue glutamate 563 participates in L-isoleucyl-5'-AMP binding. The 'KMSKS' region motif lies at 605–609; sequence KMSKS. An ATP-binding site is contributed by lysine 608. 4 residues coordinate Zn(2+): cysteine 892, cysteine 895, cysteine 912, and cysteine 915.

This sequence belongs to the class-I aminoacyl-tRNA synthetase family. IleS type 1 subfamily. Monomer. Zn(2+) serves as cofactor.

It localises to the cytoplasm. It carries out the reaction tRNA(Ile) + L-isoleucine + ATP = L-isoleucyl-tRNA(Ile) + AMP + diphosphate. Its function is as follows. Catalyzes the attachment of isoleucine to tRNA(Ile). As IleRS can inadvertently accommodate and process structurally similar amino acids such as valine, to avoid such errors it has two additional distinct tRNA(Ile)-dependent editing activities. One activity is designated as 'pretransfer' editing and involves the hydrolysis of activated Val-AMP. The other activity is designated 'posttransfer' editing and involves deacylation of mischarged Val-tRNA(Ile). The polypeptide is Isoleucine--tRNA ligase (Neisseria meningitidis serogroup A / serotype 4A (strain DSM 15465 / Z2491)).